The primary structure comprises 75 residues: Small ribosomal subunit protein bS16 (75 aa).

The protein belongs to the bacterial ribosomal protein bS16 family.

The protein is Small ribosomal subunit protein bS16 of Campylobacter jejuni subsp. jejuni serotype O:23/36 (strain 81-176).